A 184-amino-acid chain; its full sequence is Probable chemoreceptor glutamine deamidase CheD (184 aa).

It belongs to the CheD family.

It catalyses the reaction L-glutaminyl-[protein] + H2O = L-glutamyl-[protein] + NH4(+). In terms of biological role, probably deamidates glutamine residues to glutamate on methyl-accepting chemotaxis receptors (MCPs), playing an important role in chemotaxis. In Rhizobium etli (strain CIAT 652), this protein is Probable chemoreceptor glutamine deamidase CheD.